Reading from the N-terminus, the 373-residue chain is LIM domain-binding protein 2 (373 aa).

2 disordered regions span residues A244–S291 and Q327–Q373. Low complexity predominate over residues S263 to G280. One can recognise an LIM interaction domain (LID) domain in the interval D298–E337. A compositionally biased stretch (polar residues) spans N341–E361.

The protein belongs to the LDB family. In terms of assembly, interacts with LHX9. Interacts with SLK; leading to negatively regulate SLK kinase activity. Interacts with LMO4. Post-translationally, ubiquitinated by RLIM/RNF12, leading to its degradation by the proteasome.

The protein localises to the nucleus. In terms of biological role, transcription cofactor. Binds to the LIM domain of a wide variety of LIM domain-containing transcription factors. The polypeptide is LIM domain-binding protein 2 (LDB2) (Homo sapiens (Human)).